A 693-amino-acid chain; its full sequence is MIAPLLCILSYNFNTFAILNVYSKLTMFCTTNSLPMDLLLKQGSLKQEVESFCYQIVSESNDQKVGILQSEDKQLQPSVSKKSEGELSRVKFISNSNKITFSKKPKRRKYDESYLSFGFTYFGNRDAPHAQCVLCKKILSNSSLAPSKLRRHLETKHAAYKDKDISFFKQHLDSPENNKPPTPKIVNTDNESATEASYNVSYHIALSGEAHTIGELLIKPCAKDVVMRMFDEQYSKKIDAVQLSNSTVARRIKDLAADIEEELVCRLKICDGFSLQLDESADVSGLAVLLVFVRYRFNKSIEEDLLLCESLQSNATGEEIFNCINSFMQKHEIEWEKCVDVCSDASRAVDGKIAEAVTLIKYVAPESTSSHCLLYRHALAVKIMPTSLKNVLDQAVQIINYIKARPHQSRLLKILCEEMGAQHTALLLNTEVRWLSRGKVLVRLFELRRELLVFMDSAFRLSDCLTNSSWLLRLAYLADIFTKLNEVNLSMQGKNVTVFTVFDKMSSLLRKLEFWASSVEEENFDCFPTLSDFLTEINSTVDKDICSAIVQHLRGLRATLLKYFPVTNDNNAWVRNPFTVTVKPASLVARDYESLIDLTSDSQVKQNFSELSLNDFWSSLIQEYPSIARRAVRVLLPFATMHLCETGFSYYAATKTKYRKRLDAAPHMRIRLSNITPNIKRICDKKTQKHCSH.

The segment at 108–164 (RKYDESYLSFGFTYFGNRDAPHAQCVLCKKILSNSSLAPSKLRRHLETKHAAYKDKD) adopts a BED-type zinc-finger fold. Cysteine 132, cysteine 135, histidine 152, and histidine 157 together coordinate Zn(2+).

This is Zinc finger BED domain-containing protein 5 (ZBED5) from Homo sapiens (Human).